Consider the following 447-residue polypeptide: ATP-dependent protease ATPase subunit HslU (447 aa).

Residues Ile-18, 60–65, Asp-259, Glu-325, and Arg-397 contribute to the ATP site; that span reads GVGKTE.

It belongs to the ClpX chaperone family. HslU subfamily. A double ring-shaped homohexamer of HslV is capped on each side by a ring-shaped HslU homohexamer. The assembly of the HslU/HslV complex is dependent on binding of ATP.

The protein resides in the cytoplasm. ATPase subunit of a proteasome-like degradation complex; this subunit has chaperone activity. The binding of ATP and its subsequent hydrolysis by HslU are essential for unfolding of protein substrates subsequently hydrolyzed by HslV. HslU recognizes the N-terminal part of its protein substrates and unfolds these before they are guided to HslV for hydrolysis. This chain is ATP-dependent protease ATPase subunit HslU, found in Burkholderia ambifaria (strain ATCC BAA-244 / DSM 16087 / CCUG 44356 / LMG 19182 / AMMD) (Burkholderia cepacia (strain AMMD)).